Here is a 375-residue protein sequence, read N- to C-terminus: Enoyl-[acyl-carrier-protein] reductase, mitochondrial (375 aa).

A mitochondrion-targeting transit peptide spans 1 to 37 (MAALMESVVGRALKFSSTANFRSIRRGETPTLCIKSF). Tyr-96 (proton donor) is an active-site residue. NADP(+) is bound by residues Asn-169, 195–198 (TSIV), 218–220 (RDR), 287–290 (YGGM), 312–314 (FWL), and Lys-370.

Belongs to the zinc-containing alcohol dehydrogenase family. Quinone oxidoreductase subfamily. Homodimer.

Its subcellular location is the mitochondrion. It carries out the reaction a 2,3-saturated acyl-[ACP] + NADP(+) = a (2E)-enoyl-[ACP] + NADPH + H(+). Functionally, catalyzes the NADPH-dependent reduction of trans-2-enoyl thioesters in mitochondrial fatty acid synthesis (fatty acid synthesis type II). Fatty acid chain elongation in mitochondria uses acyl carrier protein (ACP) as an acyl group carrier, but the enzyme accepts both ACP and CoA thioesters as substrates in vitro. The sequence is that of Enoyl-[acyl-carrier-protein] reductase, mitochondrial from Arabidopsis thaliana (Mouse-ear cress).